The following is a 199-amino-acid chain: Nicotinamide riboside kinase 1 (199 aa).

10 to 18 (GVTNSGKTT) serves as a coordination point for ATP. Mg(2+)-binding residues include T17 and D36. D36 (proton acceptor) is an active-site residue. Residues 36–39 (DDFF) and 55–56 (YD) contribute to the substrate site. An ATP-binding site is contributed by R128. Residues R129 and 134–135 (YQ) each bind substrate. ATP is bound by residues 132-134 (RVY) and 172-174 (KSE).

The protein belongs to the uridine kinase family. NRK subfamily. Monomer.

The catalysed reaction is beta-nicotinamide D-riboside + ATP = beta-nicotinamide D-ribonucleotide + ADP + H(+). It catalyses the reaction beta-D-ribosylnicotinate + ATP = nicotinate beta-D-ribonucleotide + ADP + H(+). The protein operates within cofactor biosynthesis; NAD(+) biosynthesis. In terms of biological role, catalyzes the phosphorylation of nicotinamide riboside (NR) and nicotinic acid riboside (NaR) to form nicotinamide mononucleotide (NMN) and nicotinic acid mononucleotide (NaMN). The enzyme also phosphorylates the antitumor drugs tiazofurin and 3-deazaguanosine. The chain is Nicotinamide riboside kinase 1 (NMRK1) from Homo sapiens (Human).